Reading from the N-terminus, the 563-residue chain is Kelch repeat and BTB domain-containing protein 1 (563 aa).

Residues 21 to 88 (CDINIVINDE…IYGIPLSLTN (68 aa)) form the BTB domain. The region spanning 123–219 (CIDFYIYADK…SLLSPQVIKS (97 aa)) is the BACK domain. 6 Kelch repeats span residues 252-297 (IELI…VMDN), 298-346 (IIYM…VDDE), 347-395 (YIYC…MLNG), 397-441 (IYVI…VHAG), 442-492 (KIYI…SVHN), and 494-540 (LYVG…PIKH).

Interacts (via BTB domain) with host CUL3.

The protein localises to the host cytoplasm. Its function is as follows. Probable substrate-specific adapter of CUL3-containing E3 ubiquitin-protein ligases which mediate the ubiquitination and subsequent proteasomal degradation of host target proteins. This chain is Kelch repeat and BTB domain-containing protein 1 (KBTB1), found in Mus musculus (Mouse).